The chain runs to 555 residues: Formate--tetrahydrofolate ligase (555 aa).

ATP is bound at residue Thr64–Thr71.

This sequence belongs to the formate--tetrahydrofolate ligase family.

The catalysed reaction is (6S)-5,6,7,8-tetrahydrofolate + formate + ATP = (6R)-10-formyltetrahydrofolate + ADP + phosphate. It functions in the pathway one-carbon metabolism; tetrahydrofolate interconversion. In Phocaeicola vulgatus (strain ATCC 8482 / DSM 1447 / JCM 5826 / CCUG 4940 / NBRC 14291 / NCTC 11154) (Bacteroides vulgatus), this protein is Formate--tetrahydrofolate ligase.